The chain runs to 300 residues: Geranylgeranyl pyrophosphate synthase (300 aa).

M1 bears the N-acetylmethionine mark. The isopentenyl diphosphate site is built by K25, R28, and H57. Mg(2+) contacts are provided by D64 and D68. A dimethylallyl diphosphate-binding site is contributed by R73. R74 contributes to the isopentenyl diphosphate binding site. Residues K151, T152, Q185, K202, and K212 each coordinate dimethylallyl diphosphate.

Belongs to the FPP/GGPP synthase family. In terms of assembly, homohexamer; trimer of homodimers. Requires Mg(2+) as cofactor.

It localises to the cytoplasm. The protein resides in the perinuclear region. It is found in the myofibril. Its subcellular location is the sarcomere. The protein localises to the z line. The catalysed reaction is isopentenyl diphosphate + dimethylallyl diphosphate = (2E)-geranyl diphosphate + diphosphate. It catalyses the reaction isopentenyl diphosphate + (2E)-geranyl diphosphate = (2E,6E)-farnesyl diphosphate + diphosphate. It carries out the reaction isopentenyl diphosphate + (2E,6E)-farnesyl diphosphate = (2E,6E,10E)-geranylgeranyl diphosphate + diphosphate. It participates in isoprenoid biosynthesis; farnesyl diphosphate biosynthesis; farnesyl diphosphate from geranyl diphosphate and isopentenyl diphosphate: step 1/1. It functions in the pathway isoprenoid biosynthesis; geranyl diphosphate biosynthesis; geranyl diphosphate from dimethylallyl diphosphate and isopentenyl diphosphate: step 1/1. Its pathway is isoprenoid biosynthesis; geranylgeranyl diphosphate biosynthesis; geranylgeranyl diphosphate from farnesyl diphosphate and isopentenyl diphosphate: step 1/1. Functionally, catalyzes the trans-addition of the three molecules of IPP onto DMAPP to form geranylgeranyl pyrophosphate, an important precursor of carotenoids and geranylated proteins. In Rattus norvegicus (Rat), this protein is Geranylgeranyl pyrophosphate synthase (Ggps1).